A 317-amino-acid chain; its full sequence is MPVLGSQRRLLGSLNCTPPATFPLTLAPNRTGPQCLEVSIPDGLFLSLGLVSLVENVLVVAAIAKNRNLHSPMYYFICCLAMSDLLVSVSNVLETAVMLLLEAGALAAQAAVVQQLDNVIDVLICGSMVSSLCFLGAIAVDRYISIFYALRYHSVVTLPRAWRIIAAIWVASILTSLLFITYYNHTVVLLCLVGFFIAMLALMAVLYVHMLARACQHARGIARLQKRQRPIHQGFGLKGAATLTILLGVFFLCWGPFFLHLSLIVLCPQHPTCGCIFKNFNLFLALIICNAIVDPLIYAFRSQELRKTLQEVLQCSW.

Residues 1-37 (MPVLGSQRRLLGSLNCTPPATFPLTLAPNRTGPQCLE) lie on the Extracellular side of the membrane. Asn-29 is a glycosylation site (N-linked (GlcNAc...) asparagine). The helical transmembrane segment at 38–63 (VSIPDGLFLSLGLVSLVENVLVVAAI) threads the bilayer. The Cytoplasmic segment spans residues 64 to 72 (AKNRNLHSP). The helical transmembrane segment at 73–93 (MYYFICCLAMSDLLVSVSNVL) threads the bilayer. Residues 94–118 (ETAVMLLLEAGALAAQAAVVQQLDN) lie on the Extracellular side of the membrane. Residues 119 to 140 (VIDVLICGSMVSSLCFLGAIAV) form a helical membrane-spanning segment. Topologically, residues 141-163 (DRYISIFYALRYHSVVTLPRAWR) are cytoplasmic. The helical transmembrane segment at 164–183 (IIAAIWVASILTSLLFITYY) threads the bilayer. Residues 184 to 191 (NHTVVLLC) are Extracellular-facing. Residues 192–211 (LVGFFIAMLALMAVLYVHML) form a helical membrane-spanning segment. Residues 212–240 (ARACQHARGIARLQKRQRPIHQGFGLKGA) lie on the Cytoplasmic side of the membrane. A helical transmembrane segment spans residues 241–266 (ATLTILLGVFFLCWGPFFLHLSLIVL). Residues 267–279 (CPQHPTCGCIFKN) lie on the Extracellular side of the membrane. Residues 280 to 300 (FNLFLALIICNAIVDPLIYAF) form a helical membrane-spanning segment. Over 301-317 (RSQELRKTLQEVLQCSW) the chain is Cytoplasmic. The S-palmitoyl cysteine moiety is linked to residue Cys-315.

This sequence belongs to the G-protein coupled receptor 1 family. As to quaternary structure, interacts with MGRN1, but does not undergo MGRN1-mediated ubiquitination; this interaction competes with GNAS-binding and thus inhibits agonist-induced cAMP production. Interacts with OPN3; the interaction results in a decrease in MC1R-mediated cAMP signaling and ultimately a decrease in melanin production in melanocytes.

It localises to the cell membrane. In terms of biological role, receptor for MSH (alpha, beta and gamma) and ACTH. The activity of this receptor is mediated by G proteins which activate adenylate cyclase. Mediates melanogenesis, the production of eumelanin (black/brown) and phaeomelanin (red/yellow), via regulation of cAMP signaling in melanocytes. This chain is Melanocyte-stimulating hormone receptor (MC1R), found in Dama dama (Fallow deer).